Here is a 113-residue protein sequence, read N- to C-terminus: Small ribosomal subunit protein bS6 (113 aa).

It belongs to the bacterial ribosomal protein bS6 family.

Binds together with bS18 to 16S ribosomal RNA. This Flavobacterium johnsoniae (strain ATCC 17061 / DSM 2064 / JCM 8514 / BCRC 14874 / CCUG 350202 / NBRC 14942 / NCIMB 11054 / UW101) (Cytophaga johnsonae) protein is Small ribosomal subunit protein bS6.